We begin with the raw amino-acid sequence, 1090 residues long: Leucine--tRNA ligase, cytoplasmic (1090 aa).

N-acetylserine is present on Ser-2. The short motif at 66-76 is the 'HIGH' region element; it reads PYMNGVMHAGH. A Phosphothreonine modification is found at Thr-142. The short motif at 729–733 is the 'KMSKS' region element; it reads KMSKS. Lys-732 provides a ligand contact to ATP.

The protein belongs to the class-I aminoacyl-tRNA synthetase family.

The protein resides in the cytoplasm. The enzyme catalyses tRNA(Leu) + L-leucine + ATP = L-leucyl-tRNA(Leu) + AMP + diphosphate. In Saccharomyces cerevisiae (strain ATCC 204508 / S288c) (Baker's yeast), this protein is Leucine--tRNA ligase, cytoplasmic (CDC60).